Here is a 430-residue protein sequence, read N- to C-terminus: Asparagine--tRNA ligase (430 aa).

The protein belongs to the class-II aminoacyl-tRNA synthetase family. As to quaternary structure, homodimer.

Its subcellular location is the cytoplasm. The catalysed reaction is tRNA(Asn) + L-asparagine + ATP = L-asparaginyl-tRNA(Asn) + AMP + diphosphate + H(+). The chain is Asparagine--tRNA ligase from Staphylococcus haemolyticus (strain JCSC1435).